Reading from the N-terminus, the 281-residue chain is NADPH-dependent 7-cyano-7-deazaguanine reductase (281 aa).

88–90 (VES) contacts substrate. 90–91 (SK) contacts NADPH. The active-site Thioimide intermediate is the Cys189. Catalysis depends on Asp196, which acts as the Proton donor. 228-229 (HE) is a substrate binding site. Residue 257 to 258 (RG) coordinates NADPH.

This sequence belongs to the GTP cyclohydrolase I family. QueF type 2 subfamily. In terms of assembly, homodimer.

The protein resides in the cytoplasm. It catalyses the reaction 7-aminomethyl-7-carbaguanine + 2 NADP(+) = 7-cyano-7-deazaguanine + 2 NADPH + 3 H(+). It functions in the pathway tRNA modification; tRNA-queuosine biosynthesis. In terms of biological role, catalyzes the NADPH-dependent reduction of 7-cyano-7-deazaguanine (preQ0) to 7-aminomethyl-7-deazaguanine (preQ1). In Klebsiella pneumoniae subsp. pneumoniae (strain ATCC 700721 / MGH 78578), this protein is NADPH-dependent 7-cyano-7-deazaguanine reductase.